Reading from the N-terminus, the 263-residue chain is Proteasome subunit alpha type-1 (263 aa).

Met-1 is subject to N-acetylmethionine. Ser-110 is subject to Phosphoserine; alternate. Residue Ser-110 is glycosylated (O-linked (GlcNAc) serine; alternate). Residue Lys-115 forms a Glycyl lysine isopeptide (Lys-Gly) (interchain with G-Cter in ubiquitin) linkage. Ser-177 bears the Phosphoserine mark. A Glycyl lysine isopeptide (Lys-Gly) (interchain with G-Cter in ubiquitin) cross-link involves residue Lys-208. The tract at residues 232–263 (FLDGLEERPQRKAQPSQAADEPAEKADEPMEH) is disordered. The span at 253–263 (PAEKADEPMEH) shows a compositional bias: basic and acidic residues.

This sequence belongs to the peptidase T1A family. In terms of assembly, the 26S proteasome consists of a 20S proteasome core and two 19S regulatory subunits. The 20S proteasome core is a barrel-shaped complex made of 28 subunits that are arranged in four stacked rings. The two outer rings are each formed by seven alpha subunits, and the two inner rings are formed by seven beta subunits. The proteolytic activity is exerted by three beta-subunits PSMB5, PSMB6 and PSMB7. Interacts with NOTCH3. Interacts with ZFAND1. In terms of processing, proteolytically cleaved from a C-terminal extension in the course of the conversion of the proteasome from its latent form into its active form. Ubiquitous.

Its subcellular location is the cytoplasm. It localises to the nucleus. Its function is as follows. Component of the 20S core proteasome complex involved in the proteolytic degradation of most intracellular proteins. This complex plays numerous essential roles within the cell by associating with different regulatory particles. Associated with two 19S regulatory particles, forms the 26S proteasome and thus participates in the ATP-dependent degradation of ubiquitinated proteins. The 26S proteasome plays a key role in the maintenance of protein homeostasis by removing misfolded or damaged proteins that could impair cellular functions, and by removing proteins whose functions are no longer required. Associated with the PA200 or PA28, the 20S proteasome mediates ubiquitin-independent protein degradation. This type of proteolysis is required in several pathways including spermatogenesis (20S-PA200 complex) or generation of a subset of MHC class I-presented antigenic peptides (20S-PA28 complex). This Rattus norvegicus (Rat) protein is Proteasome subunit alpha type-1 (Psma1).